The chain runs to 491 residues: Glutamate--tRNA ligase (491 aa).

The 'HIGH' region signature appears at 12–22 (PSPTGTPHVGL). A disordered region spans residues 111–134 (STPEEVEERHKAAGRDPKLGYDNF). Residues 117 to 134 (EERHKAAGRDPKLGYDNF) are compositionally biased toward basic and acidic residues. Positions 256 to 260 (KLSKR) match the 'KMSKS' region motif. Lys-259 is an ATP binding site.

Belongs to the class-I aminoacyl-tRNA synthetase family. Glutamate--tRNA ligase type 1 subfamily. As to quaternary structure, monomer.

It is found in the cytoplasm. The enzyme catalyses tRNA(Glu) + L-glutamate + ATP = L-glutamyl-tRNA(Glu) + AMP + diphosphate. In terms of biological role, catalyzes the attachment of glutamate to tRNA(Glu) in a two-step reaction: glutamate is first activated by ATP to form Glu-AMP and then transferred to the acceptor end of tRNA(Glu). The polypeptide is Glutamate--tRNA ligase (Rhodococcus jostii (strain RHA1)).